Consider the following 666-residue polypeptide: MVDDEDDITFDSPEEEIAHYREKYRQALDMLTDTRAELEEFQQSSKELEDEMEQELAANDKQQADLREKIKRLDAEKEEWRTKHIALQKMHSSTTSAMQREMDNLRSERDKTLVALRDLEMGNDELERNERVAISSLLDLESKYNRAIEEKTLLEQDLAQKDELETETQRLKDELREANEEISILKDQLARAIATPPSSVSTSSPIHDAACDLSRIHLSDDINASPLPPPVPSKNKSITPEGHSPRRGLSRSGTMSSIPVASPSTKRFSQQIPHSPSFSTLSRSTTSRNLAAAAGTPGSPALARSRSGIPQASPARGIVLASHQQTKSRGFKLLHDLQARLKATDDKLGGAKVPRRNVSNPASVFGVGKRVTSTTSTTSSTTTAPAPHARVTALAKDHNTTPTAQSQQFPGSGIMSPGWVLVGEGEGEDTPTGPWSMTLPAEPNSPLDPTFRSSSTTSNRSLPSRPGIPSPLASGSARSTTSGTAQRQAGQRPSSRLGLKASRRDSEARPLSPSMIPVPSFSSRPMSPDVYQPLRSATPTSGFSSFSASASTSNPPRPNSRTGKRNPIGRGPPPLSSSTRLHHQRSRQSLSGAGPTPTTGADKVERAKRGPRRSSLSNMDKPSLMSASSGSRTPSGRPTSVHVFRETPPPVPRIPSAILKESKVKK.

Residues 14–195 (EEEIAHYREK…KDQLARAIAT (182 aa)) are a coiled coil. Disordered regions lie at residues 40 to 64 (EFQQSSKELEDEMEQELAANDKQQA), 220 to 310 (DDIN…SGIP), 369 to 388 (KRVTSTTSTTSSTTTAPAPH), and 397 to 666 (DHNT…KVKK). Residues 251-274 (RSGTMSSIPVASPSTKRFSQQIPH) are compositionally biased toward polar residues. Low complexity-rich tracts occupy residues 275 to 287 (SPSFSTLSRSTTS) and 372 to 383 (TSTTSTTSSTTT). Polar residues predominate over residues 400–410 (TTPTAQSQQFP). Low complexity-rich tracts occupy residues 449–465 (PTFRSSSTTSNRSLPSR), 473–485 (ASGSARSTTSGTA), and 536–554 (SATPTSGFSSFSASASTSN). Composition is skewed to polar residues over residues 587–599 (RQSLSGAGPTPTT) and 614–638 (SSLSNMDKPSLMSASSGSRTPSGRP).

This sequence belongs to the nudE family. Self-associates. Interacts with PAC1.

It is found in the cytoplasm. The protein resides in the cytoskeleton. In terms of biological role, required for nuclear migration. In Cryptococcus neoformans var. neoformans serotype D (strain JEC21 / ATCC MYA-565) (Filobasidiella neoformans), this protein is Nuclear distribution protein nudE homolog 1 (NDE1).